A 289-amino-acid chain; its full sequence is Splicing factor C9orf78 homolog (289 aa).

Over residues 1-12 (MPVVRKIFRRRR) the composition is skewed to basic residues. Disordered regions lie at residues 1 to 27 (MPVV…SEEV) and 86 to 109 (GKDK…TNRR). The interval 5–58 (RKIFRRRRGDSESEEDEQDSEEVRLKLEETREVQNLRKRPNGVSAVALLVGEKV) is interaction with SNRNP200. 2 positions are modified to phosphoserine: serine 15 and serine 17. The residue at position 147 (tyrosine 147) is a Phosphotyrosine. The span at 232-283 (LNAPIRRNKEEPKARPLRVGDTEKPEPERSPPNRKRPANEKATDDYHYEKFK) shows a compositional bias: basic and acidic residues. The segment at 232–289 (LNAPIRRNKEEPKARPLRVGDTEKPEPERSPPNRKRPANEKATDDYHYEKFKKMNRRY) is disordered. Phosphothreonine is present on threonine 253. Serine 261 carries the post-translational modification Phosphoserine.

This sequence belongs to the TLS1 family. Component of the spliceosome. Interacts with SNRNP200; the interaction is direct. Interacts with PRPF8.

The protein localises to the nucleus. It localises to the chromosome. It is found in the centromere. In terms of biological role, plays a role in pre-mRNA splicing by promoting usage of the upstream 3'-splice site at alternative NAGNAG splice sites; these are sites featuring alternative acceptor motifs separated by only a few nucleotides. May also modulate exon inclusion events. Plays a role in spliceosomal remodeling by displacing WBP4 from SNRNP200 and may act to inhibit SNRNP200 helicase activity. Binds U5 snRNA. Required for proper chromosome segregation. Not required for splicing of shelterin components. This chain is Splicing factor C9orf78 homolog, found in Pongo abelii (Sumatran orangutan).